Here is a 299-residue protein sequence, read N- to C-terminus: MGQKIHPVGFRLPVTRNWSSRWYASNRNFATMLAEDLKVREYLKAKLKSAAVSRILIERPAKNARITIYSARPGVVIGKKGEDIENLKAELTRRLGVPVAVNIEEVRKPEIDAQLIADSITQQLEKRIMFRRAMKRAMQNAMRLGAQGIKIMSAGRLNGIEIARTEWYREGRVPLHTLRADIDYGFSEAKTTYGIIGVKVWVYRGDRLANGEAPVIKTDEREDDRRNRRGPRSDRPAGDRRPPSRDGARPGPRGPRADAGAAAPTDKPADGAAPAAADGPKAAVKRVRKAVAPGDAKGE.

One can recognise a KH type-2 domain in the interval 39–107 (VREYLKAKLK…PVAVNIEEVR (69 aa)). Residues 214 to 299 (PVIKTDERED…AVAPGDAKGE (86 aa)) form a disordered region. Over residues 217 to 248 (KTDEREDDRRNRRGPRSDRPAGDRRPPSRDGA) the composition is skewed to basic and acidic residues. Over residues 257-282 (ADAGAAAPTDKPADGAAPAAADGPKA) the composition is skewed to low complexity.

Belongs to the universal ribosomal protein uS3 family. As to quaternary structure, part of the 30S ribosomal subunit. Forms a tight complex with proteins S10 and S14.

Its function is as follows. Binds the lower part of the 30S subunit head. Binds mRNA in the 70S ribosome, positioning it for translation. This chain is Small ribosomal subunit protein uS3, found in Methylibium petroleiphilum (strain ATCC BAA-1232 / LMG 22953 / PM1).